The primary structure comprises 102 residues: Legumin-like protein Mac i 2 (102 aa).

The protein belongs to the 11S seed storage protein (globulins) family.

Its function is as follows. Seed storage protein. The chain is Legumin-like protein Mac i 2 from Macadamia integrifolia (Macadamia nut).